Reading from the N-terminus, the 194-residue chain is Imidazoleglycerol-phosphate dehydratase (194 aa).

Belongs to the imidazoleglycerol-phosphate dehydratase family.

The protein resides in the cytoplasm. It carries out the reaction D-erythro-1-(imidazol-4-yl)glycerol 3-phosphate = 3-(imidazol-4-yl)-2-oxopropyl phosphate + H2O. The protein operates within amino-acid biosynthesis; L-histidine biosynthesis; L-histidine from 5-phospho-alpha-D-ribose 1-diphosphate: step 6/9. The sequence is that of Imidazoleglycerol-phosphate dehydratase from Ruminiclostridium cellulolyticum (strain ATCC 35319 / DSM 5812 / JCM 6584 / H10) (Clostridium cellulolyticum).